A 249-amino-acid polypeptide reads, in one-letter code: Ribonuclease PH (249 aa).

Phosphate contacts are provided by residues R90 and G128–R130.

This sequence belongs to the RNase PH family. Homohexameric ring arranged as a trimer of dimers.

The catalysed reaction is tRNA(n+1) + phosphate = tRNA(n) + a ribonucleoside 5'-diphosphate. In terms of biological role, phosphorolytic 3'-5' exoribonuclease that plays an important role in tRNA 3'-end maturation. Removes nucleotide residues following the 3'-CCA terminus of tRNAs; can also add nucleotides to the ends of RNA molecules by using nucleoside diphosphates as substrates, but this may not be physiologically important. Probably plays a role in initiation of 16S rRNA degradation (leading to ribosome degradation) during starvation. This chain is Ribonuclease PH, found in Parasynechococcus marenigrum (strain WH8102).